The chain runs to 300 residues: GTPase Era (300 aa).

Residues 5–176 (HSGFVCLVGR…IDVLAAALPA (172 aa)) form the Era-type G domain. Residues 13 to 20 (GRPNTGKS) form a G1 region. 13-20 (GRPNTGKS) contacts GTP. The tract at residues 39 to 43 (QTTRH) is G2. Residues 60–63 (DTPG) form a G3 region. Residues 60-64 (DTPGL) and 125-128 (TKID) contribute to the GTP site. The interval 125 to 128 (TKID) is G4. The tract at residues 155-157 (VSA) is G5. The 80-residue stretch at 207-286 (VRDELPHSLA…YLDLRVKVAK (80 aa)) folds into the KH type-2 domain.

Belongs to the TRAFAC class TrmE-Era-EngA-EngB-Septin-like GTPase superfamily. Era GTPase family. Monomer.

The protein resides in the cell envelope. Its subcellular location is the secreted. It localises to the cell wall. Exhibits GTPase activity. Binds RNA but is probably not involved in ribosome assembly in mycobacteria. This is GTPase Era from Mycobacterium bovis (strain ATCC BAA-935 / AF2122/97).